A 503-amino-acid chain; its full sequence is Cytochrome P450 11B1, mitochondrial (503 aa).

The transit peptide at 1–24 directs the protein to the mitochondrion; that stretch reads MALRAKAEVCMAAPWLSLQRARAL. Cys450 provides a ligand contact to heme.

Belongs to the cytochrome P450 family. Requires heme as cofactor.

Its subcellular location is the mitochondrion inner membrane. The catalysed reaction is a steroid + 2 reduced [adrenodoxin] + O2 + 2 H(+) = an 11beta-hydroxysteroid + 2 oxidized [adrenodoxin] + H2O. It carries out the reaction 11-deoxycortisol + 2 reduced [adrenodoxin] + O2 + 2 H(+) = cortisol + 2 oxidized [adrenodoxin] + H2O. It catalyses the reaction 21-hydroxyprogesterone + 2 reduced [adrenodoxin] + O2 + 2 H(+) = corticosterone + 2 oxidized [adrenodoxin] + H2O. The enzyme catalyses 21-hydroxyprogesterone + 2 reduced [adrenodoxin] + O2 + 2 H(+) = 18-hydroxy-11-deoxycorticosterone + 2 oxidized [adrenodoxin] + H2O. The catalysed reaction is 21-hydroxyprogesterone + 2 reduced [adrenodoxin] + O2 + 2 H(+) = 19-hydroxy-11-deoxycorticosterone + 2 oxidized [adrenodoxin] + H2O. It carries out the reaction cortisol + 2 reduced [adrenodoxin] + O2 + 2 H(+) = 18-hydroxycortisol + 2 oxidized [adrenodoxin] + H2O. It catalyses the reaction 11-deoxycortisol + 2 reduced [adrenodoxin] + O2 + 2 H(+) = 18-hydroxy-11-deoxycortisol + 2 oxidized [adrenodoxin] + H2O. It functions in the pathway steroid biosynthesis; glucocorticoid biosynthesis. Its pathway is steroid hormone biosynthesis. In terms of biological role, a cytochrome P450 monooxygenase involved in the biosynthesis of adrenal corticoids. Catalyzes a variety of reactions that are essential for many species, including detoxification, defense, and the formation of endogenous chemicals like steroid hormones. Steroid 11beta, 18- and 19-hydroxylase with preferred regioselectivity at 11beta, then 18, and lastly 19. Catalyzes the hydroxylation of 11-deoxycortisol and 11-deoxycorticosterone (21-hydroxyprogesterone) at 11beta position, yielding cortisol or corticosterone, respectively, but cannot produce aldosterone. Mechanistically, uses molecular oxygen inserting one oxygen atom into a substrate for hydroxylation and reducing the second into a water molecule. Two electrons are provided by NADPH via a two-protein mitochondrial transfer system comprising flavoprotein FDXR (adrenodoxin/ferredoxin reductase) and nonheme iron-sulfur protein FDX1 or FDX2 (adrenodoxin/ferredoxin). Due to its lack of 18-oxidation activity, it is incapable of generating aldosterone. Could also be involved in the androgen metabolic pathway. The protein is Cytochrome P450 11B1, mitochondrial (CYP11B1) of Papio hamadryas ursinus (Chacma baboon).